Reading from the N-terminus, the 416-residue chain is Gamma-glutamyl phosphate reductase (416 aa).

Belongs to the gamma-glutamyl phosphate reductase family.

Its subcellular location is the cytoplasm. It catalyses the reaction L-glutamate 5-semialdehyde + phosphate + NADP(+) = L-glutamyl 5-phosphate + NADPH + H(+). It functions in the pathway amino-acid biosynthesis; L-proline biosynthesis; L-glutamate 5-semialdehyde from L-glutamate: step 2/2. Its function is as follows. Catalyzes the NADPH-dependent reduction of L-glutamate 5-phosphate into L-glutamate 5-semialdehyde and phosphate. The product spontaneously undergoes cyclization to form 1-pyrroline-5-carboxylate. This is Gamma-glutamyl phosphate reductase from Leptospira interrogans serogroup Icterohaemorrhagiae serovar copenhageni (strain Fiocruz L1-130).